Reading from the N-terminus, the 391-residue chain is Eukaryotic initiation factor 4A-3 (391 aa).

A Q motif motif is present at residues 18–46 (ASFAEMGIKDDLLRGVYQYGFEKPSAIQQ). The 171-residue stretch at 49–219 (VLPIISGRDV…SKFMTDPVRI (171 aa)) folds into the Helicase ATP-binding domain. 62 to 69 (AQSGTGKT) is an ATP binding site. A DEAD box motif is present at residues 167–170 (DESD). The region spanning 230 to 391 (GIKQFFVAVE…EMPMNVADLI (162 aa)) is the Helicase C-terminal domain.

Belongs to the DEAD box helicase family. eIF4A subfamily. EIF4F is a multi-subunit complex, the composition of which varies with external and internal environmental conditions. It is composed of at least EIF4A, EIF4E and EIF4G.

It catalyses the reaction ATP + H2O = ADP + phosphate + H(+). ATP-dependent RNA helicase which is a subunit of the eIF4F complex involved in cap recognition and is required for mRNA binding to ribosome. In the current model of translation initiation, eIF4A unwinds RNA secondary structures in the 5'-UTR of mRNAs which is necessary to allow efficient binding of the small ribosomal subunit, and subsequent scanning for the initiator codon. This is Eukaryotic initiation factor 4A-3 from Nicotiana plumbaginifolia (Leadwort-leaved tobacco).